Reading from the N-terminus, the 151-residue chain is MLP-like protein 328 (151 aa).

The protein belongs to the MLP family.

The sequence is that of MLP-like protein 328 (MLP328) from Arabidopsis thaliana (Mouse-ear cress).